A 637-amino-acid chain; its full sequence is Penicillin-binding protein 1A (637 aa).

A transglycosylase region spans residues 62-224; that stretch reads LIADLGSERR…NQYDPYSHPE (163 aa). Catalysis depends on Glu91, which acts as the Proton donor; for transglycosylase activity. Residues 298-612 form a transpeptidase region; sequence EVYTNVDSKV…RLTPIVGDGF (315 aa). Residue Ser371 is the Acyl-ester intermediate; for transpeptidase activity of the active site.

This sequence in the N-terminal section; belongs to the glycosyltransferase 51 family. In the C-terminal section; belongs to the transpeptidase family.

The protein resides in the secreted. The enzyme catalyses [GlcNAc-(1-&gt;4)-Mur2Ac(oyl-L-Ala-gamma-D-Glu-L-Lys-D-Ala-D-Ala)](n)-di-trans,octa-cis-undecaprenyl diphosphate + beta-D-GlcNAc-(1-&gt;4)-Mur2Ac(oyl-L-Ala-gamma-D-Glu-L-Lys-D-Ala-D-Ala)-di-trans,octa-cis-undecaprenyl diphosphate = [GlcNAc-(1-&gt;4)-Mur2Ac(oyl-L-Ala-gamma-D-Glu-L-Lys-D-Ala-D-Ala)](n+1)-di-trans,octa-cis-undecaprenyl diphosphate + di-trans,octa-cis-undecaprenyl diphosphate + H(+). It catalyses the reaction Preferential cleavage: (Ac)2-L-Lys-D-Ala-|-D-Ala. Also transpeptidation of peptidyl-alanyl moieties that are N-acyl substituents of D-alanine.. It functions in the pathway cell wall biogenesis; peptidoglycan biosynthesis. Cell wall formation. The sequence is that of Penicillin-binding protein 1A (ponA) from Streptococcus oralis.